Here is a 98-residue protein sequence, read N- to C-terminus: Gene 4 protein (98 aa).

The region spanning 38 to 73 (GCVRAATDVDHIKRGNDHSRSNLQAACHVCHGKKSA) is the HNH domain. Residues 75-98 (EGVARRRELRARRKRPPERHPGRR) form a disordered region. Positions 81–98 (RELRARRKRPPERHPGRR) are enriched in basic residues.

In Mycobacterium (Mycobacteriophage L5), this protein is Gene 4 protein (4).